The primary structure comprises 413 residues: MASKKLKYKTDFDKCVLTDNFAARGWTRCGDKDDDDWNIYWATVWNVRNIFNPKSGIRLNDMQIINHFPNHYELTRKDLMVKNFKRYKKELEKENSPYCQKDENGNYLYLDFIPQTFTLPGEYSLFVEEFHRNPNATWIVKPASRSQGKGIFLLRKIQQLKKIGGGTNSNPLQAFSLKEAYVVSRYIDNPLLVGGRKFDLRIYALVTSYRPLKVYLYAMGFGRFCNEQYTQDIAEMDNMFIHLTNVAIQKFSDKYSEKHGGKWSLQSLRYYLEMVYGTDMANKCFDDINNIIIMSLKSVQSIIINDKHCFEMYGYDILIDENCKPWLIEINASPSLTVTGKIDKELKTELIKNVYQIVIPDDWNDDSSKTGANTSTQTKVGDFNILYDEAQEKKISQQQQQQKKNINSKTIWK.

The TTL domain maps to 2 to 370; it reads ASKKLKYKTD…DDWNDDSSKT (369 aa). ATP-binding positions include 184-187, Lys197, and Asp199; that span reads SRYI.

It belongs to the tubulin polyglutamylase family.

It is found in the cytoplasm. The protein resides in the cytoskeleton. Its subcellular location is the cilium basal body. It localises to the contractile vacuole. Its function is as follows. Probable tubulin polyglutamylase with a strong preference for alpha-tubulin. Modifies alpha-tubulin, generating side chains of glutamate on the gamma-carboxyl groups of specific glutamate residues within the C-terminal tail of alpha-tubulin. This chain is Probable alpha-tubulin polyglutamylase Ttll1 (Ttll1), found in Tetrahymena thermophila (strain SB210).